Reading from the N-terminus, the 255-residue chain is Hydroxyacylglutathione hydrolase (255 aa).

Residues histidine 53, histidine 55, aspartate 57, histidine 58, histidine 110, aspartate 127, and histidine 165 each coordinate Zn(2+).

Belongs to the metallo-beta-lactamase superfamily. Glyoxalase II family. As to quaternary structure, monomer. Requires Zn(2+) as cofactor.

The enzyme catalyses an S-(2-hydroxyacyl)glutathione + H2O = a 2-hydroxy carboxylate + glutathione + H(+). The protein operates within secondary metabolite metabolism; methylglyoxal degradation; (R)-lactate from methylglyoxal: step 2/2. Thiolesterase that catalyzes the hydrolysis of S-D-lactoyl-glutathione to form glutathione and D-lactic acid. This is Hydroxyacylglutathione hydrolase from Xanthomonas axonopodis pv. citri (strain 306).